We begin with the raw amino-acid sequence, 274 residues long: Pantothenate synthetase (274 aa).

Position 27–34 (27–34 (MGALHQGH)) interacts with ATP. The Proton donor role is filled by His-34. A (R)-pantoate-binding site is contributed by Gln-58. Residue Gln-58 participates in beta-alanine binding. ATP is bound at residue 144-147 (GKKD). Gln-150 is a binding site for (R)-pantoate. ATP is bound by residues Ile-173 and 181–184 (LSSR).

This sequence belongs to the pantothenate synthetase family. Homodimer.

The protein localises to the cytoplasm. It catalyses the reaction (R)-pantoate + beta-alanine + ATP = (R)-pantothenate + AMP + diphosphate + H(+). The protein operates within cofactor biosynthesis; (R)-pantothenate biosynthesis; (R)-pantothenate from (R)-pantoate and beta-alanine: step 1/1. Catalyzes the condensation of pantoate with beta-alanine in an ATP-dependent reaction via a pantoyl-adenylate intermediate. The sequence is that of Pantothenate synthetase from Sulfurovum sp. (strain NBC37-1).